The following is a 298-amino-acid chain: 1D-myo-inositol 2-acetamido-2-deoxy-alpha-D-glucopyranoside deacetylase (298 aa).

Zn(2+) contacts are provided by H14, D17, and H148. The tract at residues 277-298 (RGPAGPDGREHDLFAGLDGPAT) is disordered.

The protein belongs to the MshB deacetylase family. Requires Zn(2+) as cofactor.

The enzyme catalyses 1D-myo-inositol 2-acetamido-2-deoxy-alpha-D-glucopyranoside + H2O = 1D-myo-inositol 2-amino-2-deoxy-alpha-D-glucopyranoside + acetate. Catalyzes the deacetylation of 1D-myo-inositol 2-acetamido-2-deoxy-alpha-D-glucopyranoside (GlcNAc-Ins) in the mycothiol biosynthesis pathway. This is 1D-myo-inositol 2-acetamido-2-deoxy-alpha-D-glucopyranoside deacetylase from Nocardia farcinica (strain IFM 10152).